We begin with the raw amino-acid sequence, 217 residues long: Probable transaldolase (217 aa).

Residue K84 is the Schiff-base intermediate with substrate of the active site.

Belongs to the transaldolase family. Type 3B subfamily.

The protein localises to the cytoplasm. The enzyme catalyses D-sedoheptulose 7-phosphate + D-glyceraldehyde 3-phosphate = D-erythrose 4-phosphate + beta-D-fructose 6-phosphate. The protein operates within carbohydrate degradation; pentose phosphate pathway; D-glyceraldehyde 3-phosphate and beta-D-fructose 6-phosphate from D-ribose 5-phosphate and D-xylulose 5-phosphate (non-oxidative stage): step 2/3. Its function is as follows. Transaldolase is important for the balance of metabolites in the pentose-phosphate pathway. The chain is Probable transaldolase from Roseiflexus sp. (strain RS-1).